The primary structure comprises 943 residues: Isoleucine--tRNA ligase (943 aa).

Residues 58–68 (PYANGTIHIGH) carry the 'HIGH' region motif. E567 serves as a coordination point for L-isoleucyl-5'-AMP. The 'KMSKS' region motif lies at 608–612 (KMSKS). Residue K611 coordinates ATP. 4 residues coordinate Zn(2+): C906, C909, C926, and C929.

The protein belongs to the class-I aminoacyl-tRNA synthetase family. IleS type 1 subfamily. Monomer. Requires Zn(2+) as cofactor.

Its subcellular location is the cytoplasm. It carries out the reaction tRNA(Ile) + L-isoleucine + ATP = L-isoleucyl-tRNA(Ile) + AMP + diphosphate. Catalyzes the attachment of isoleucine to tRNA(Ile). As IleRS can inadvertently accommodate and process structurally similar amino acids such as valine, to avoid such errors it has two additional distinct tRNA(Ile)-dependent editing activities. One activity is designated as 'pretransfer' editing and involves the hydrolysis of activated Val-AMP. The other activity is designated 'posttransfer' editing and involves deacylation of mischarged Val-tRNA(Ile). This Pseudomonas syringae pv. tomato (strain ATCC BAA-871 / DC3000) protein is Isoleucine--tRNA ligase.